Here is a 211-residue protein sequence, read N- to C-terminus: Arginine exporter protein ArgO (211 aa).

6 consecutive transmembrane segments (helical) span residues 1–21 (MISY…PLGP), 37–57 (LMIA…GIFG), 68–88 (LLAL…FGAL), 111–131 (IIAT…DTFV), 147–167 (WFAL…ALLA), and 179–199 (AQRI…FQLA).

It belongs to the LysE/ArgO transporter (TC 2.A.75) family.

The protein resides in the cell inner membrane. The enzyme catalyses L-arginine(in) = L-arginine(out). In terms of biological role, involved in the export of arginine. Important to control the intracellular level of arginine and the correct balance between arginine and lysine. The sequence is that of Arginine exporter protein ArgO from Salmonella schwarzengrund (strain CVM19633).